Here is a 403-residue protein sequence, read N- to C-terminus: S-adenosylmethionine synthase (403 aa).

140 to 145 is a binding site for ATP; it reads GKGSTD.

This sequence belongs to the AdoMet synthase 2 family. It depends on Mg(2+) as a cofactor.

The catalysed reaction is L-methionine + ATP + H2O = S-adenosyl-L-methionine + phosphate + diphosphate. The protein operates within amino-acid biosynthesis; S-adenosyl-L-methionine biosynthesis; S-adenosyl-L-methionine from L-methionine: step 1/1. In terms of biological role, catalyzes the formation of S-adenosylmethionine from methionine and ATP. The protein is S-adenosylmethionine synthase of Sulfolobus acidocaldarius (strain ATCC 33909 / DSM 639 / JCM 8929 / NBRC 15157 / NCIMB 11770).